The primary structure comprises 214 residues: ATP phosphoribosyltransferase (214 aa).

This sequence belongs to the ATP phosphoribosyltransferase family. Short subfamily. As to quaternary structure, heteromultimer composed of HisG and HisZ subunits.

The protein localises to the cytoplasm. The enzyme catalyses 1-(5-phospho-beta-D-ribosyl)-ATP + diphosphate = 5-phospho-alpha-D-ribose 1-diphosphate + ATP. Its pathway is amino-acid biosynthesis; L-histidine biosynthesis; L-histidine from 5-phospho-alpha-D-ribose 1-diphosphate: step 1/9. Catalyzes the condensation of ATP and 5-phosphoribose 1-diphosphate to form N'-(5'-phosphoribosyl)-ATP (PR-ATP). Has a crucial role in the pathway because the rate of histidine biosynthesis seems to be controlled primarily by regulation of HisG enzymatic activity. The polypeptide is ATP phosphoribosyltransferase (Ruminiclostridium cellulolyticum (strain ATCC 35319 / DSM 5812 / JCM 6584 / H10) (Clostridium cellulolyticum)).